The following is a 199-amino-acid chain: ATP-dependent Clp protease proteolytic subunit (199 aa).

Residue Ser-99 is the Nucleophile of the active site. His-124 is a catalytic residue.

Belongs to the peptidase S14 family. As to quaternary structure, fourteen ClpP subunits assemble into 2 heptameric rings which stack back to back to give a disk-like structure with a central cavity, resembling the structure of eukaryotic proteasomes.

Its subcellular location is the cytoplasm. The enzyme catalyses Hydrolysis of proteins to small peptides in the presence of ATP and magnesium. alpha-casein is the usual test substrate. In the absence of ATP, only oligopeptides shorter than five residues are hydrolyzed (such as succinyl-Leu-Tyr-|-NHMec, and Leu-Tyr-Leu-|-Tyr-Trp, in which cleavage of the -Tyr-|-Leu- and -Tyr-|-Trp bonds also occurs).. Its function is as follows. Cleaves peptides in various proteins in a process that requires ATP hydrolysis. Has a chymotrypsin-like activity. Plays a major role in the degradation of misfolded proteins. The polypeptide is ATP-dependent Clp protease proteolytic subunit (Moorella thermoacetica (strain ATCC 39073 / JCM 9320)).